A 210-amino-acid polypeptide reads, in one-letter code: MKEVAVYQIPVLSPSGRRELAADLPAEINPHLLWEVVRWQLAKRRRGTASTKTRGEVAYSGRKIWPQKHTGRARHGDIGAPIFVGGGVVFGPKPRDYSYTLPKKVRKKGLAMAVADRAREGKLLLVEAFAGVERQDQAIPAWAKEAGLDGSESVLLVTGNELVRRAARNLPWVVTLAPEGLNVYDIVRTERLVMDLDAWEVFQNRIGGEA.

This sequence belongs to the universal ribosomal protein uL4 family. As to quaternary structure, part of the 50S ribosomal subunit.

In terms of biological role, one of the primary rRNA binding proteins, this protein initially binds near the 5'-end of the 23S rRNA. It is important during the early stages of 50S assembly. It makes multiple contacts with different domains of the 23S rRNA in the assembled 50S subunit and ribosome. Its function is as follows. Forms part of the polypeptide exit tunnel. The chain is Large ribosomal subunit protein uL4 (rplD) from Thermus thermophilus.